A 352-amino-acid chain; its full sequence is Divinyl chlorophyll a/b light-harvesting protein PcbB (352 aa).

The next 6 helical transmembrane spans lie at 27–47, 89–109, 142–162, 203–223, 243–263, and 307–327; these read FIAA…AFTL, CTVI…GGIL, FILG…VEWA, VMGG…FHII, AVLS…AFWS, and LANV…WHAL.

This sequence belongs to the PsbB/PsbC family. IsiA/Pcb subfamily. The antenna complex consists of divinyl chlorophylls (a and b) and divinyl chlorophyll a/b binding proteins and binds more divinyl chlorophyll b than does the antenna complex from high-light-adapted Prochlorococcus. The cofactor is divinyl chlorophyll a. Divinyl chlorophyll b serves as cofactor.

It is found in the cellular thylakoid membrane. Its function is as follows. The antenna complex functions as a light receptor, it captures and delivers excitation energy to photosystems II and I. The Prochlorales pcb genes are not related to higher plant LHCs. This Prochlorococcus marinus (strain NATL2A) protein is Divinyl chlorophyll a/b light-harvesting protein PcbB (pcbB).